The chain runs to 295 residues: GATA transcription factor 18 (295 aa).

The GATA-type zinc-finger motif lies at 148–202 (SLLARRCANCDTTSTPLWRNGPRGPKSLCNACGIRFKKEERRTTAATGNTVVGAA).

This sequence belongs to the type IV zinc-finger family. Class B subfamily. As to quaternary structure, homodimer. Forms heterodimers with GATA19, GATA22 and GATA21. Interacts with JAG. Binds to AGO10/PNH. As to expression, expressed in vegetative and inflorescence shoot apical meristems (SAMs), axillary (SAMs), floral meristems, developing ovules and stamens, vascular tissues, and in the embryo.

The protein resides in the nucleus. Functionally, transcriptional factor that specifically binds 5'-GATA-3' or 5'-GAT-3' motifs within gene promoters (including its own promoter and GATA21 promoter), thus regulating the expression of genes mostly involved in hormone responses and floral organ specification (including genes regulating hormones responses). Regulates both flower and shoot apical meristem (SAM) development, especially for establishing organ boundaries in shoots and flowers, probably by controlling the number and position of WUS-expressing cells. Coregulates, with AGO10/PNH, the shoot apical meristem (SAM) organization. Regulates floral organ development via the promotion of JAG and NPR5/BOP2 expression. Modulates cytokinin homeostasis in organ boundaries by regulating CKX3 expression. Involved in cell proliferation and differentiation. Required to position the inductive proembryo boundary via the regulation of gene expression and for early embryonic development. Together with GIF1/AN3, mediates cotyledon identity by preventing ectopic root formation through the repression of PLT1 expression. The protein is GATA transcription factor 18 of Arabidopsis thaliana (Mouse-ear cress).